A 966-amino-acid polypeptide reads, in one-letter code: Leucine--tRNA ligase (966 aa).

Residues 41-51 (PYLNGNLHAGH) carry the 'HIGH' region motif. The 'KMSKS' region signature appears at 632 to 636 (KMSKS). Lys-635 lines the ATP pocket.

This sequence belongs to the class-I aminoacyl-tRNA synthetase family.

It is found in the cytoplasm. The catalysed reaction is tRNA(Leu) + L-leucine + ATP = L-leucyl-tRNA(Leu) + AMP + diphosphate. The polypeptide is Leucine--tRNA ligase (Methanosarcina barkeri (strain Fusaro / DSM 804)).